The sequence spans 151 residues: UPF0208 membrane protein plu3094 (151 aa).

A run of 2 helical transmembrane segments spans residues 46–65 and 69–91; these read FGIR…QIAL and LGPA…WWLG.

Belongs to the UPF0208 family.

Its subcellular location is the cell inner membrane. The protein is UPF0208 membrane protein plu3094 of Photorhabdus laumondii subsp. laumondii (strain DSM 15139 / CIP 105565 / TT01) (Photorhabdus luminescens subsp. laumondii).